The chain runs to 172 residues: Ribosome maturation factor RimM (172 aa).

A PRC barrel domain is found at 97–170 (DDEYYYDEII…LITIDVLEGL (74 aa)).

It belongs to the RimM family. Binds ribosomal protein uS19.

The protein resides in the cytoplasm. An accessory protein needed during the final step in the assembly of 30S ribosomal subunit, possibly for assembly of the head region. Essential for efficient processing of 16S rRNA. May be needed both before and after RbfA during the maturation of 16S rRNA. It has affinity for free ribosomal 30S subunits but not for 70S ribosomes. The sequence is that of Ribosome maturation factor RimM from Leuconostoc citreum (strain KM20).